Reading from the N-terminus, the 592-residue chain is MRTHYCGHLNKSLAGQTVELCGWVNRRRDLGGLIFIDMRDREGIVQVVVDPDMADAYAVASQLRNEFCIKLTGEVRTRPESQVNKEMATGEVEILAKGLEIINRSDVLPLDFNQKNSEEQRLKYRYLDLRRPEMSDRIKLRAKASSFVRRFLDDNGFLDIETPVLTKATPEGARDYLVPSRVHKGSFYALPQSPQLFKQLLMMSGFDRYYQIVKCFRDEDLRADRQPEFTQIDIETSFMTSDQVRAVTEKMVREMWLELLNVDLGEFPVMPFSEAIRRFGSDKPDLRNPLELVDVADLVKDVDFKVFSGPANDEKGRVAVIRVPGGAELTRKQIDEYTGFVNIYGAKGLAWMKVNDRAAGMEGIQSPVAKFLSEDVINGILERTQAESGDIILFGADKANIVAEALGALRLKLGKDLGLTKEGTWAPLWVVDFPMFEEDDEGNLHAMHHPFTSPLGLTAEELKANPAPAISNAYDMVLNGYEVGGGSVRIHNAEMQAAVFDILGIDADEQKLKFGFLLDALKFGTPPHAGLAFGLDRLVMLLCGTENIRDVIAFPKTTAAACLMTDAPSVANPAALEELAIAVTVAKEKSAE.

L-aspartate is bound at residue glutamate 171. The interval 195–198 is aspartate; it reads QLFK. Arginine 217 contributes to the L-aspartate binding site. Residues 217-219 and glutamine 226 each bind ATP; that span reads RDE. Residue histidine 448 coordinates L-aspartate. An ATP-binding site is contributed by glutamate 482. L-aspartate is bound at residue arginine 489. ATP is bound at residue 534-537; that stretch reads GLDR.

The protein belongs to the class-II aminoacyl-tRNA synthetase family. Type 1 subfamily. Homodimer.

The protein localises to the cytoplasm. The catalysed reaction is tRNA(Asp) + L-aspartate + ATP = L-aspartyl-tRNA(Asp) + AMP + diphosphate. In terms of biological role, catalyzes the attachment of L-aspartate to tRNA(Asp) in a two-step reaction: L-aspartate is first activated by ATP to form Asp-AMP and then transferred to the acceptor end of tRNA(Asp). The protein is Aspartate--tRNA ligase of Vibrio vulnificus (strain CMCP6).